Here is a 257-residue protein sequence, read N- to C-terminus: 3-methyl-2-oxobutanoate hydroxymethyltransferase (257 aa).

Residues Asp42 and Asp86 each contribute to the Mg(2+) site. 3-methyl-2-oxobutanoate-binding positions include 42–43, Asp86, and Lys116; that span reads DS. Glu118 lines the Mg(2+) pocket. Glu185 acts as the Proton acceptor in catalysis.

It belongs to the PanB family. As to quaternary structure, homodecamer; pentamer of dimers. It depends on Mg(2+) as a cofactor.

It is found in the cytoplasm. It carries out the reaction 3-methyl-2-oxobutanoate + (6R)-5,10-methylene-5,6,7,8-tetrahydrofolate + H2O = 2-dehydropantoate + (6S)-5,6,7,8-tetrahydrofolate. The protein operates within cofactor biosynthesis; (R)-pantothenate biosynthesis; (R)-pantoate from 3-methyl-2-oxobutanoate: step 1/2. Catalyzes the reversible reaction in which hydroxymethyl group from 5,10-methylenetetrahydrofolate is transferred onto alpha-ketoisovalerate to form ketopantoate. The protein is 3-methyl-2-oxobutanoate hydroxymethyltransferase of Prochlorococcus marinus (strain MIT 9515).